The following is a 261-amino-acid chain: Na(+)-translocating NADH-quinone reductase subunit C (261 aa).

Residues 12 to 32 (LGVVVGLSLVCSIIVSTAAVG) traverse the membrane as a helical segment. At Thr229 the chain carries FMN phosphoryl threonine.

As to quaternary structure, composed of six subunits; NqrA, NqrB, NqrC, NqrD, NqrE and NqrF. The cofactor is FMN.

The protein resides in the cell inner membrane. It catalyses the reaction a ubiquinone + n Na(+)(in) + NADH + H(+) = a ubiquinol + n Na(+)(out) + NAD(+). In terms of biological role, NQR complex catalyzes the reduction of ubiquinone-1 to ubiquinol by two successive reactions, coupled with the transport of Na(+) ions from the cytoplasm to the periplasm. NqrA to NqrE are probably involved in the second step, the conversion of ubisemiquinone to ubiquinol. In Vibrio campbellii (strain ATCC BAA-1116), this protein is Na(+)-translocating NADH-quinone reductase subunit C.